Consider the following 346-residue polypeptide: MNTADTPRKVGARWMNGELWGEGREYETFVFKNRCLAELLGLKEKVTIADISKHVYNGCPTNTPEVILFWKSHSSLIYILSKVTYCYSIIISSGSLNDPVMNEKPRLYLRDHVALSPMAWPESIEIEKVSMTADRCPPCDVYAENFLIQPNAHINGRLEAMLALCFCILADTTKFPARNIDFNYFIRTANQSTNPPFIQCPPLQHQFLCHVALMELGERNETNMVLNALYVEIMWVSRPVCEFSVYTEFKHKLVTTCRLLNSIYHSHEKLPKPTARADLAQSSQCVKTYFNGENVNVTVLAYGIYVLHKMSRVENPRHLVSYFQKYIRVERHVTKSQLKRLLMMYY.

This sequence belongs to the herpesviridae U59/UL88 family.

This is Protein U59 from Elephantid herpesvirus 1 (isolate Asian elephant/Berlin/Kiba/1998) (EIHV-1).